The primary structure comprises 182 residues: Peptidyl-tRNA hydrolase (182 aa).

Tyr14 contributes to the tRNA binding site. His19 functions as the Proton acceptor in the catalytic mechanism. The tRNA site is built by Phe64, Asn66, and Asn112.

The protein belongs to the PTH family. Monomer.

It localises to the cytoplasm. The catalysed reaction is an N-acyl-L-alpha-aminoacyl-tRNA + H2O = an N-acyl-L-amino acid + a tRNA + H(+). Functionally, hydrolyzes ribosome-free peptidyl-tRNAs (with 1 or more amino acids incorporated), which drop off the ribosome during protein synthesis, or as a result of ribosome stalling. In terms of biological role, catalyzes the release of premature peptidyl moieties from peptidyl-tRNA molecules trapped in stalled 50S ribosomal subunits, and thus maintains levels of free tRNAs and 50S ribosomes. The sequence is that of Peptidyl-tRNA hydrolase from Wolbachia sp. subsp. Brugia malayi (strain TRS).